A 356-amino-acid chain; its full sequence is Probable G-protein coupled receptor 32 (356 aa).

Residues 1–44 (MNGVSEGTRGCSDRQPGVLTRDRSCSRKMNSSGCLSEEVGSLRP) are Extracellular-facing. Residue asparagine 30 is glycosylated (N-linked (GlcNAc...) asparagine). A helical membrane pass occupies residues 45–67 (LTVVILSASIVVGVLGNGLVLWM). Topologically, residues 68–78 (TVFRMARTVST) are cytoplasmic. Residues 79 to 100 (VCFFHLALADFMLSLSLPIAMY) form a helical membrane-spanning segment. Residues 101–116 (YIVSRQWLLGEWACKL) lie on the Extracellular side of the membrane. A disulfide bridge links cysteine 114 with cysteine 191. Residues 117–137 (YITFVFLSYFASNCLLVFISV) form a helical membrane-spanning segment. The Cytoplasmic portion of the chain corresponds to 138 to 156 (DRCISVLYPVWALNHRTVQ). A helical transmembrane segment spans residues 157–178 (RASWLAFGVWLLAAALCSAHLK). Over 179-220 (FRTTRKWNGCTHCYLAFNSDNETAQIWIEGVVEGHIIGTIGH) the chain is Extracellular. A glycan (N-linked (GlcNAc...) asparagine) is linked at asparagine 199. The chain crosses the membrane as a helical span at residues 221–241 (FLLGFLGPLAIIGTCAHLIRA). Topologically, residues 242–257 (KLLREGWVHANRPKRL) are cytoplasmic. The helical transmembrane segment at 258 to 280 (LLVLVSAFFIFWSPFNVVLLVHL) threads the bilayer. Residues 281 to 300 (WRRVMLKEIYHPRMLLILQA) lie on the Extracellular side of the membrane. Residues 301–320 (SFALGCVNSSLNPFLYVFVG) form a helical membrane-spanning segment. At 321–356 (RDFQEKFFQSLTSALARAFGEEEFLSSCPRGNAPRE) the chain is on the cytoplasmic side.

The protein belongs to the G-protein coupled receptor 1 family. As to expression, expressed in resting primary human macrophages.

Its subcellular location is the cell membrane. Functionally, G-protein coupled receptor that binds to several ligands including resolvin D1 (RvD1) with high affinity, leading to rapid and transient activation of numerous intracellular signaling pathways. In macrophages, enhances the RvD1-stimulated phagocytic and clearance functions. Macrophages migrate less toward different chemoattractant stimuli but phagocytose more microbial particles. Prevents the increase in Ca(2+) and activation of ERK1/2 used by histamine and its H1 receptor subtype to induce goblet cell secretion by activating PKC and GRK2 to counter-regulate the histamine receptor. The chain is Probable G-protein coupled receptor 32 (GPR32) from Homo sapiens (Human).